The chain runs to 952 residues: Ent-kaur-16-ene synthase (952 aa).

Mg(2+) contacts are provided by Asp668, Glu672, Asn848, Asp849, Ser852, and Asp856. The DEXXE motif motif lies at 668–672 (DEYME).

The protein belongs to the terpene synthase family. Mg(2+) is required as a cofactor.

The catalysed reaction is ent-copalyl diphosphate = ent-kaur-16-ene + diphosphate. It catalyses the reaction (2E,6E,10E)-geranylgeranyl diphosphate = ent-copalyl diphosphate. Its pathway is plant hormone biosynthesis; gibberellin biosynthesis. Functionally, catalyzes the conversion of geranylgeranyl diphosphate to the gibberellin precursor ent-kaurene diphosphate in a two step process. The polypeptide is Ent-kaur-16-ene synthase (cps) (Fusarium fujikuroi (Bakanae and foot rot disease fungus)).